Reading from the N-terminus, the 70-residue chain is Large ribosomal subunit protein eL24 (70 aa).

4 residues coordinate Zn(2+): Cys6, Cys9, Cys32, and Cys36. A C4-type zinc finger spans residues Cys6–Cys36.

This sequence belongs to the eukaryotic ribosomal protein eL24 family. Part of the 50S ribosomal subunit. Forms a cluster with proteins L3 and L14. The cofactor is Zn(2+).

Functionally, binds to the 23S rRNA. The protein is Large ribosomal subunit protein eL24 of Caldivirga maquilingensis (strain ATCC 700844 / DSM 13496 / JCM 10307 / IC-167).